The primary structure comprises 290 residues: D-tagatose-1,6-bisphosphate aldolase subunit KbaY (290 aa).

Asp-82 serves as the catalytic Proton donor. Zn(2+) is bound by residues His-83 and His-180. Gly-181 is a binding site for dihydroxyacetone phosphate. Residue His-208 participates in Zn(2+) binding. Dihydroxyacetone phosphate contacts are provided by residues 209–211 (GAS) and 230–233 (NVAT).

This sequence belongs to the class II fructose-bisphosphate aldolase family. TagBP aldolase KbaY subfamily. In terms of assembly, homotetramer. Forms a complex with KbaZ. Zn(2+) serves as cofactor.

The catalysed reaction is D-tagatofuranose 1,6-bisphosphate = D-glyceraldehyde 3-phosphate + dihydroxyacetone phosphate. It functions in the pathway carbohydrate metabolism; D-tagatose 6-phosphate degradation; D-glyceraldehyde 3-phosphate and glycerone phosphate from D-tagatose 6-phosphate: step 2/2. Its function is as follows. Catalytic subunit of the tagatose-1,6-bisphosphate aldolase KbaYZ, which catalyzes the reversible aldol condensation of dihydroxyacetone phosphate (DHAP or glycerone-phosphate) with glyceraldehyde 3-phosphate (G3P) to produce tagatose 1,6-bisphosphate (TBP). Requires KbaZ subunit for full activity and stability. The polypeptide is D-tagatose-1,6-bisphosphate aldolase subunit KbaY (Salmonella arizonae (strain ATCC BAA-731 / CDC346-86 / RSK2980)).